The following is a 309-amino-acid chain: Ribosomal RNA small subunit methyltransferase H (309 aa).

Residues 30 to 32 (GGH), D50, F74, D96, and Q103 each bind S-adenosyl-L-methionine.

This sequence belongs to the methyltransferase superfamily. RsmH family.

The protein localises to the cytoplasm. It carries out the reaction cytidine(1402) in 16S rRNA + S-adenosyl-L-methionine = N(4)-methylcytidine(1402) in 16S rRNA + S-adenosyl-L-homocysteine + H(+). In terms of biological role, specifically methylates the N4 position of cytidine in position 1402 (C1402) of 16S rRNA. The sequence is that of Ribosomal RNA small subunit methyltransferase H from Wigglesworthia glossinidia brevipalpis.